A 491-amino-acid chain; its full sequence is Cytochrome P450 2B2 (491 aa).

Position 128 is a phosphoserine; by PKA (serine 128). Heme is bound at residue cysteine 436.

This sequence belongs to the cytochrome P450 family. Requires heme as cofactor. Post-translationally, phosphorylation is accompanied by a decrease in enzyme activity.

It is found in the endoplasmic reticulum membrane. It localises to the microsome membrane. The catalysed reaction is an organic molecule + reduced [NADPH--hemoprotein reductase] + O2 = an alcohol + oxidized [NADPH--hemoprotein reductase] + H2O + H(+). Cytochromes P450 are a group of heme-thiolate monooxygenases. In liver microsomes, this enzyme is involved in an NADPH-dependent electron transport pathway. It oxidizes a variety of structurally unrelated compounds, including steroids, fatty acids, and xenobiotics. The chain is Cytochrome P450 2B2 (Cyp2b2) from Rattus norvegicus (Rat).